The sequence spans 525 residues: Glucans biosynthesis protein G (525 aa).

The N-terminal stretch at M1–A35 is a signal peptide.

This sequence belongs to the OpgD/OpgG family.

It localises to the periplasm. It functions in the pathway glycan metabolism; osmoregulated periplasmic glucan (OPG) biosynthesis. Involved in the biosynthesis of osmoregulated periplasmic glucans (OPGs). In Pseudomonas paraeruginosa (strain DSM 24068 / PA7) (Pseudomonas aeruginosa (strain PA7)), this protein is Glucans biosynthesis protein G.